The primary structure comprises 327 residues: Surface protein P12p (327 aa).

6-Cys domains follow at residues 21-168 and 169-304; these read NIEI…LKKN and IIFG…FSNY. Disulfide bonds link Cys25/Cys60, Cys74/Cys144, Cys93/Cys142, Cys173/Cys208, Cys223/Cys285, and Cys234/Cys283. 3 N-linked (GlcNAc...) asparagine glycosylation sites follow: Asn246, Asn264, and Asn298.

The protein resides in the cell surface. Its subcellular location is the cell membrane. This is Surface protein P12p (P12p) from Plasmodium berghei (strain Anka).